Consider the following 394-residue polypeptide: Cell division protein FtsZ (394 aa).

GTP is bound by residues 21 to 25, 108 to 110, E139, R143, and D187; these read GGGGN and GTG.

Belongs to the FtsZ family. In terms of assembly, homodimer. Polymerizes to form a dynamic ring structure in a strictly GTP-dependent manner. Interacts directly with several other division proteins. Interacts with the SulA inhibitor.

The protein resides in the cytoplasm. Functionally, essential cell division protein that forms a contractile ring structure (Z ring) at the future cell division site. The regulation of the ring assembly controls the timing and the location of cell division. One of the functions of the FtsZ ring is to recruit other cell division proteins to the septum to produce a new cell wall between the dividing cells. Binds GTP and shows GTPase activity. This Pseudomonas aeruginosa (strain ATCC 15692 / DSM 22644 / CIP 104116 / JCM 14847 / LMG 12228 / 1C / PRS 101 / PAO1) protein is Cell division protein FtsZ.